Reading from the N-terminus, the 186-residue chain is Putative CTD phosphatase-like protein 355R (186 aa).

The 181-residue stretch at 2-182 (ENNKKKLILL…TELLKVQKTL (181 aa)) folds into the FCP1 homology domain.

It belongs to the IIV-6 355R family.

Its function is as follows. May function as a phosphatase. The sequence is that of Putative CTD phosphatase-like protein 355R from Aedes vexans (Inland floodwater mosquito).